Reading from the N-terminus, the 995-residue chain is Polynucleotide 5'-hydroxyl-kinase NOL9 (995 aa).

Disordered regions lie at residues 18-173 (EQRE…SSMK) and 271-359 (IKVF…YEPP). Composition is skewed to low complexity over residues 75 to 94 (TAGA…SSPS) and 110 to 129 (VNKS…KSAK). A compositionally biased stretch (acidic residues) spans 279–354 (EETDSDEDDI…DIFDTDDLDS (76 aa)). 639-646 (GGKGVGKS) contacts ATP.

Belongs to the Clp1 family. NOL9/GRC3 subfamily.

It localises to the nucleus. The protein resides in the nucleolus. Functionally, polynucleotide 5'-kinase involved in rRNA processing. This Drosophila melanogaster (Fruit fly) protein is Polynucleotide 5'-hydroxyl-kinase NOL9.